Reading from the N-terminus, the 247-residue chain is Putative methyltransferase YqeM (247 aa).

The protein belongs to the methyltransferase superfamily.

Its function is as follows. May be a S-adenosyl-L-methionine (SAM)-dependent methyltransferase. This chain is Putative methyltransferase YqeM (yqeM), found in Bacillus subtilis (strain 168).